Reading from the N-terminus, the 205-residue chain is MSKRESAKYKIDRRIGENIWGRPKSPVNRREYGPGQHGQRRKGKLSDYGVQLCAKQKLKGFYGDISEKQFRKIYQEAVRRRGDTGENLIGLLESRLDAIVYRSKFVPTIFASRQFINHGHVNVNGRRTNIQSYRCKPGDVIEIRERSKQLLLVLEATQLNERDVPDYIEADHSKMKATFVRIPAFSDVPYAVQMEPNLVVEFYSR.

A disordered region spans residues 20–44 (WGRPKSPVNRREYGPGQHGQRRKGK). One can recognise an S4 RNA-binding domain in the interval 94–154 (SRLDAIVYRS…ERSKQLLLVL (61 aa)).

It belongs to the universal ribosomal protein uS4 family. Part of the 30S ribosomal subunit. Contacts protein S5. The interaction surface between S4 and S5 is involved in control of translational fidelity.

One of the primary rRNA binding proteins, it binds directly to 16S rRNA where it nucleates assembly of the body of the 30S subunit. In terms of biological role, with S5 and S12 plays an important role in translational accuracy. This chain is Small ribosomal subunit protein uS4, found in Bartonella bacilliformis (strain ATCC 35685 / KC583 / Herrer 020/F12,63).